Reading from the N-terminus, the 186-residue chain is UPF0340 protein M6_Spy1622 (186 aa).

The protein belongs to the UPF0340 family.

This Streptococcus pyogenes serotype M6 (strain ATCC BAA-946 / MGAS10394) protein is UPF0340 protein M6_Spy1622.